The chain runs to 90 residues: Probable Fe(2+)-trafficking protein (90 aa).

It belongs to the Fe(2+)-trafficking protein family. As to quaternary structure, monomer.

In terms of biological role, could be a mediator in iron transactions between iron acquisition and iron-requiring processes, such as synthesis and/or repair of Fe-S clusters in biosynthetic enzymes. The chain is Probable Fe(2+)-trafficking protein from Yersinia pestis bv. Antiqua (strain Antiqua).